The sequence spans 265 residues: Esterase claE (265 aa).

Catalysis depends on charge relay system residues Ser-121, Asp-211, and His-239.

This sequence belongs to the LovG family.

It participates in secondary metabolite biosynthesis. In terms of biological role, esterase; part of the cla gene cluster that produces clavatol and ortho-quinone methide. The clavatol biosynthesis cluster cla and the terrestric acid cluster tra are both involved in the production of peniphenones and penilactones. The non-reducing PKS claF is responsible for the formation of clavatol from successive condensations of 3 malonyl-CoA units, presumably with a simple acetyl-CoA starter unit, and 2 methylation steps. The esterase claE probably collaborates with claF by catalyzing the hydrolysis of ACP-bound acyl intermediates to free the ACP from stalled intermediates. The clavatol oxidase claD then converts clavatol to hydroxyclavatol. Spontaneous dehydration of hydroxyclavatol leads to the accumulation of the highly active ortho-quinone methide. On the other hand, the PKS-NRPS hybrid traA is involved in the formation of crustosic acid, with the help of traB and traD. The polyketide synthase module (PKS) of traA is responsible for the synthesis of the polyketide backbone via the condensation of an acetyl-CoA starter unit with 3 malonyl-CoA units. The downstream nonribosomal peptide synthetase (NRPS) module then amidates the carboxyl end of the polyketide with L-malic acid. Because traA lacks a designated enoylreductase (ER) domain, the required activity is provided the enoyl reductase traG. Crustosic acid undergoes decarboxylation and isomerization to the terrestric acid, catalyzed by the 2-oxoglutarate-dependent dioxygenase traH. Both acids are further converted to the 2 gamma-butyrolactones (R)-5-methyltetronic acid and (S)-5-carboxylmethyltetronic acid, with involvement of the cytochrome P450 monooxygenase claJ. Spontaneous addition of the methide to these gamma-butyrolactones leads to peniphenone D and penilactone D, which undergo again stereospecific attacking by methide to give penilactones A and B. The protein is Esterase claE of Penicillium crustosum (Blue mold fungus).